The following is a 421-amino-acid chain: Atrochrysone carboxyl ACP thioesterase (421 aa).

4 residues coordinate Zn(2+): H207, H209, D211, and H212. Residue D211 is the Proton donor/acceptor of the active site.

It belongs to the metallo-beta-lactamase superfamily. Zn(2+) serves as cofactor. As to expression, specifically expressed in conidia.

The catalysed reaction is atrochrysone carboxyl-[ACP] + H2O = atrochrysone carboxylate + holo-[ACP] + H(+). It functions in the pathway secondary metabolite biosynthesis. Its function is as follows. Atrochrysone carboxyl ACP thioesterase; part of the gene cluster that mediates the biosynthesis of trypacidin, a mycotoxin with antiprotozoal activity and that plays a role in the infection process. The pathway begins with the synthesis of atrochrysone thioester by the polyketide synthase (PKS) tpcC. The atrochrysone carboxyl ACP thioesterase tpcB then breaks the thioester bond and releases the atrochrysone carboxylic acid from tpcC. The decarboxylase tpcK converts atrochrysone carboxylic acid to atrochrysone which is further reduced into emodin anthrone. The next step is performed by the emodin anthrone oxygenase tpcL that catalyzes the oxidation of emodin anthrone to emodin. Emodin O-methyltransferase encoded by tpcA catalyzes methylation of the 8-hydroxy group of emodin to form questin. Ring cleavage of questin by questin oxidase tpcI leads to desmethylsulochrin via several intermediates including questin epoxide. Another methylation step catalyzed by tpcM leads to the formation of sulochrin which is further converted to monomethylsulfochrin by tpcH. Finally, the tpcJ catalyzes the conversion of monomethylsulfochrin to trypacidin. Trypacidin is toxic for human pulmonary and bronchial epithelial cells by initiating the intracellular formation of nitric oxide (NO) and hydrogen peroxide (H(2)O(2)), thus triggering host necrotic cell death. The trypacidin pathway is also able to produce endocrocin via a distinct route from the endocrocin Enc pathway. The sequence is that of Atrochrysone carboxyl ACP thioesterase from Aspergillus fumigatus (strain ATCC MYA-4609 / CBS 101355 / FGSC A1100 / Af293) (Neosartorya fumigata).